The following is a 607-amino-acid chain: WD repeat-containing protein 1 (607 aa).

WD repeat units lie at residues E4–I45, P48–T87, L93–T135, S138–G176, K180–G218, V224–V263, T270–K306, R311–A351, T358–V408, L432–I474, K480–V518, S523–L561, and A566–V604.

It belongs to the WD repeat AIP1 family.

The protein resides in the cell membrane. It localises to the cytoplasm. Its subcellular location is the cytoskeleton. It is found in the nucleus. Its function is as follows. Induces disassembly of actin filaments in conjunction with ADF/cofilin family proteins. Doesn't sever actin filaments alone, but caps the barbed ends of filaments severed by cofilin, which blocks annealing and depolymerization and allows more extensive severing by cofilin. The sequence is that of WD repeat-containing protein 1 from Xenopus tropicalis (Western clawed frog).